Reading from the N-terminus, the 240-residue chain is Histidinol dehydrogenase homolog oryD (240 aa).

The Zn(2+) site is built by Gln-64 and His-67. Residue Glu-134 is the Proton acceptor of the active site. Positions 168 and 228 each coordinate Zn(2+).

The protein belongs to the histidinol dehydrogenase family. Requires Zn(2+) as cofactor.

It participates in secondary metabolite biosynthesis. Its function is as follows. Histidinol dehydrogenase homolog; part of the gene cluster that mediates the biosynthesis of oryzines, natural products with an unusual maleidride backbone. The two subunits of the fungal fatty acid synthase oryfasA and oryfasB probably form octenoic acid. This fatty acid is most likely activated by the acyl-CoA ligase oryP to give octenyl-CoA before the citrate synthase-like protein oryE catalyzes condensation with oxaloacetate to form tricarboxylic acid. The next steps of the pathways are conjectural, but a favorite possible route has been proposed, beginning with decarboxylation and concomitant dehydration by the decarboxylase oryM, followed by tautomerization, which may lead to the production of a diene intermediate. Reduction of this diene intermediate could give the known metabolite piliformic acid. On the pathway to oryzine B and oryzine A, however, hydroxylation of the diene by the alpha-ketoglutarate-dependent dioxygenase oryG and lactonisation by the lactonohydrolases oryH or oryL could give oryzine B directly. Finally, enoyl reduction by the dehydrogenase oryD would then convert oryzine B into oryzine A. This Aspergillus oryzae (strain ATCC 42149 / RIB 40) (Yellow koji mold) protein is Histidinol dehydrogenase homolog oryD.